A 552-amino-acid chain; its full sequence is Ribulokinase (552 aa).

It belongs to the ribulokinase family.

The enzyme catalyses D-ribulose + ATP = D-ribulose 5-phosphate + ADP + H(+). It carries out the reaction L-ribulose + ATP = L-ribulose 5-phosphate + ADP + H(+). It functions in the pathway carbohydrate degradation; L-arabinose degradation via L-ribulose; D-xylulose 5-phosphate from L-arabinose (bacterial route): step 2/3. In Bacillus licheniformis (strain ATCC 14580 / DSM 13 / JCM 2505 / CCUG 7422 / NBRC 12200 / NCIMB 9375 / NCTC 10341 / NRRL NRS-1264 / Gibson 46), this protein is Ribulokinase.